Reading from the N-terminus, the 485-residue chain is Aspartyl/glutamyl-tRNA(Asn/Gln) amidotransferase subunit B (485 aa).

It belongs to the GatB/GatE family. GatB subfamily. Heterotrimer of A, B and C subunits.

It catalyses the reaction L-glutamyl-tRNA(Gln) + L-glutamine + ATP + H2O = L-glutaminyl-tRNA(Gln) + L-glutamate + ADP + phosphate + H(+). It carries out the reaction L-aspartyl-tRNA(Asn) + L-glutamine + ATP + H2O = L-asparaginyl-tRNA(Asn) + L-glutamate + ADP + phosphate + 2 H(+). Functionally, allows the formation of correctly charged Asn-tRNA(Asn) or Gln-tRNA(Gln) through the transamidation of misacylated Asp-tRNA(Asn) or Glu-tRNA(Gln) in organisms which lack either or both of asparaginyl-tRNA or glutaminyl-tRNA synthetases. The reaction takes place in the presence of glutamine and ATP through an activated phospho-Asp-tRNA(Asn) or phospho-Glu-tRNA(Gln). This is Aspartyl/glutamyl-tRNA(Asn/Gln) amidotransferase subunit B from Methylacidiphilum infernorum (isolate V4) (Methylokorus infernorum (strain V4)).